A 154-amino-acid polypeptide reads, in one-letter code: MAIELDLQLAVEDQNGLPSAQDFQTWLDKTIPPFQPQAEVTIRIVDSQESHQLNHDYRGKDKPTNVLSFPFEAPPGMEMDLLGDLVICRQVVEQEAIDQDKPLMAHWAHMVVHGSLHLLGYDHIEDDEAEEMESLETEIMQGMGFTDPYLAEKE.

Zn(2+)-binding residues include H113, H117, and H123.

This sequence belongs to the endoribonuclease YbeY family. Requires Zn(2+) as cofactor.

The protein resides in the cytoplasm. Functionally, single strand-specific metallo-endoribonuclease involved in late-stage 70S ribosome quality control and in maturation of the 3' terminus of the 16S rRNA. The polypeptide is Endoribonuclease YbeY (Vibrio vulnificus (strain CMCP6)).